A 532-amino-acid chain; its full sequence is Cytochrome P450 12b1, mitochondrial (532 aa).

C480 provides a ligand contact to heme.

This sequence belongs to the cytochrome P450 family. Requires heme as cofactor.

Its subcellular location is the mitochondrion. Its function is as follows. Probably involved in steroid hormones biosynthesis. The sequence is that of Cytochrome P450 12b1, mitochondrial (Cyp12b1) from Drosophila acanthoptera (Fruit fly).